A 115-amino-acid polypeptide reads, in one-letter code: Transmembrane protein 218 (115 aa).

The next 3 helical transmembrane spans lie at valine 5–leucine 25, phenylalanine 38–proline 58, and tyrosine 81–histidine 101.

The protein belongs to the TMEM218 family. In terms of assembly, interacts with TMEM67.

The protein resides in the membrane. The protein localises to the cell projection. It is found in the cilium. Its function is as follows. May be involved in ciliary biogenesis or function. This is Transmembrane protein 218 (TMEM218) from Homo sapiens (Human).